The sequence spans 920 residues: Glutamate receptor 2.2 (920 aa).

The signal sequence occupies residues 1–24; sequence MKNSKLFFRFLFLFFFFCLESSRG. The Extracellular segment spans residues 25 to 580; the sequence is QDNGKTQVNI…DKFSFLKPLS (556 aa). N-linked (GlcNAc...) asparagine glycosylation is found at Asn-53, Asn-204, Asn-267, Asn-331, Asn-342, Asn-477, and Asn-542. The chain crosses the membrane as a helical span at residues 581–601; that stretch reads IELWLTTLVFFFLVGISVWTL. Over 602 to 610 the chain is Cytoplasmic; that stretch reads EHRVNSDFR. Residues 611 to 631 traverse the membrane as a helical segment; that stretch reads GPANYQASTIFWFAFSTMVFA. Residues 632–635 are Cytoplasmic-facing; it reads PRER. The helical transmembrane segment at 636 to 656 threads the bilayer; the sequence is VLSFGARSLVVTWYFVLLVLT. At 657–830 the chain is on the extracellular side; it reads QSYTASLASL…VTAIQLGVGS (174 aa). Asn-702 carries N-linked (GlcNAc...) asparagine glycosylation. A helical transmembrane segment spans residues 831–851; that stretch reads FWFLFLVVFVVCVLALGKFTF. Over 852–920 the chain is Cytoplasmic; it reads CFLWKTKGKD…QVNQTDPDCL (69 aa).

It belongs to the glutamate-gated ion channel (TC 1.A.10.1) family. As to quaternary structure, may form heteromers. As to expression, expressed predominantly in roots.

It is found in the membrane. Its function is as follows. Glutamate-gated receptor that probably acts as a non-selective cation channel. May be involved in light-signal transduction and calcium homeostasis via the regulation of calcium influx into cells. This chain is Glutamate receptor 2.2 (GLR2.2), found in Arabidopsis thaliana (Mouse-ear cress).